The chain runs to 532 residues: Metal-staphylopine-binding protein CntA (532 aa).

The N-terminal stretch at 1–20 is a signal peptide; it reads MRKLTKMSAMLLASGLILTG. Cys21 carries the N-palmitoyl cysteine lipid modification. The S-diacylglycerol cysteine moiety is linked to residue Cys21. Residues Arg165, Arg418, and Asn448 each coordinate staphylopine.

This sequence belongs to the bacterial solute-binding protein 5 family. The complex is composed of two ATP-binding proteins (CntD and CntF), two transmembrane proteins (CntB and CntC) and a solute-binding protein (CntA).

The protein localises to the cell membrane. Part of the ABC transporter complex CntABCDF (Opp1) involved in the uptake of metal in complex with the metallophore staphylopine (StP). May be involved in the import of a large array of divalent metals ions such as nickel, cobalt, zinc, copper and iron. Binds the metal via the metallophore StP, and transfers the StP-metal complex to the membrane-bound permease. This Staphylococcus aureus (strain Mu50 / ATCC 700699) protein is Metal-staphylopine-binding protein CntA.